The chain runs to 283 residues: MQVFREKQLLIQAIQKVKSDGKSIGLVPTMGALHEGHLSLVTNALKDSDQVIVSIFVNPTQFDNPEDLEKYPRNLNKDIELLEKETSDIWVFSPTANELYGDKILSQNFDFEGLESVMEGEFRAGHFNGVGTVVKHLFEVITPDKAFFGEKDFQQLQIIRKLIEKTGLPVEIVGCPILREDSGLARSSRNERLSFQNRKEAAFIYEVLQNANRLFGTESAEHTTNWVENQFKNNQHLKLEYFEIADSETLKKVNKKEKGKQYRAFIAAYSDGIRLIDNIALNN.

30–37 (MGALHEGH) contacts ATP. His-37 acts as the Proton donor in catalysis. Gln-61 is a (R)-pantoate binding site. Gln-61 is a beta-alanine binding site. 149–152 (GEKD) lines the ATP pocket. Gln-155 is a binding site for (R)-pantoate. Residues Leu-178 and 186 to 189 (RSSR) contribute to the ATP site.

It belongs to the pantothenate synthetase family. As to quaternary structure, homodimer.

It is found in the cytoplasm. It carries out the reaction (R)-pantoate + beta-alanine + ATP = (R)-pantothenate + AMP + diphosphate + H(+). Its pathway is cofactor biosynthesis; (R)-pantothenate biosynthesis; (R)-pantothenate from (R)-pantoate and beta-alanine: step 1/1. Catalyzes the condensation of pantoate with beta-alanine in an ATP-dependent reaction via a pantoyl-adenylate intermediate. The polypeptide is Pantothenate synthetase (Christiangramia forsetii (strain DSM 17595 / CGMCC 1.15422 / KT0803) (Gramella forsetii)).